Here is a 545-residue protein sequence, read N- to C-terminus: Mesoderm induction early response protein 2 (545 aa).

Position 11 is a phosphoserine (serine 11). Residues 100-189 (DPISDRESEG…SSDTEEDSLP (90 aa)) are disordered. The segment covering 140–153 (QSSADDLTPSVTSH) has biased composition (polar residues). Positions 195–292 (KEIMVGPQFQ…EALRRLRFNV (98 aa)) constitute an ELM2 domain. The SANT domain occupies 297–349 (DGLCAWSEEECRNFEHGFRVHGKNFHLIQANKVRTRSVGECVEYYYLWKKSER). Residues 364–464 (YVPSGTTDAD…YQPAVTAPEP (101 aa)) form a disordered region.

Part of a complex containing at least CDYL, MIER1, MIER2, HDAC1 and HDAC2.

The protein resides in the nucleus. Functionally, transcriptional repressor. In Homo sapiens (Human), this protein is Mesoderm induction early response protein 2 (MIER2).